Reading from the N-terminus, the 334-residue chain is Ornithine carbamoyltransferase (334 aa).

Residues 56-59 (STRT), Gln83, Arg107, and 134-137 (HPTQ) contribute to the carbamoyl phosphate site. L-ornithine contacts are provided by residues Asn168, Asp232, and 236 to 237 (SM). Carbamoyl phosphate is bound by residues 274–275 (CL) and Arg320.

Belongs to the aspartate/ornithine carbamoyltransferase superfamily. OTCase family.

Its subcellular location is the cytoplasm. It catalyses the reaction carbamoyl phosphate + L-ornithine = L-citrulline + phosphate + H(+). It functions in the pathway amino-acid biosynthesis; L-arginine biosynthesis; L-arginine from L-ornithine and carbamoyl phosphate: step 1/3. Its function is as follows. Reversibly catalyzes the transfer of the carbamoyl group from carbamoyl phosphate (CP) to the N(epsilon) atom of ornithine (ORN) to produce L-citrulline. The sequence is that of Ornithine carbamoyltransferase from Escherichia coli (strain 55989 / EAEC).